A 146-amino-acid chain; its full sequence is UPF0310 protein YdcG (146 aa).

This sequence belongs to the UPF0310 family.

The sequence is that of UPF0310 protein YdcG (ydcG) from Bacillus subtilis (strain 168).